A 499-amino-acid chain; its full sequence is MTPRYVLAIDQGTTSSRAILFDRAGDIVGSAQREFAQIFPQPGWVEHDPREILTSVYATLTELLSRGQIDPRHIAALGITNQRETTVVWDRATGQPIHNAIVWQSRQSHTICERLKSEGHEALVRERTGLLIDAYFSATKVRWILDHVEGAQQRAERGELLFGTIDSWLVWNLSGGQAHVTDYSNAARTLLFNIHTLDWDDDLLALLDIPRAMLPQVRDSSSVYAHTRPQFFFDHPIPIAGIAGDQQAALFGQACFQPGMVKNTYGTGCFMLMHTGAQAVRSRNGLLTTIAWGLDGRVEYALEGSIFVAGSVVQWLRDGLRMIERAGDSQALAVQVPDSGGVYLVPAFVGLGAPYWRSDVRGAMFGLTRGTHKAHFVRAALEAMAYQTRDVLDAMQSDAGIALTELRADGGAIGNDFLAGFQADILGVPLLRPRLTETTALGAAYLAGLAVGFWTSREQIAAQWGLDRRFEPQMEVARREKLYAGWQQAVAATLAFHVD.

Residue threonine 13 participates in ADP binding. Residues threonine 13, threonine 14, and serine 15 each contribute to the ATP site. Threonine 13 is a sn-glycerol 3-phosphate binding site. Arginine 17 provides a ligand contact to ADP. Arginine 83, glutamate 84, tyrosine 135, and aspartate 245 together coordinate sn-glycerol 3-phosphate. The glycerol site is built by arginine 83, glutamate 84, tyrosine 135, aspartate 245, and glutamine 246. Residues threonine 267 and glycine 310 each contribute to the ADP site. Residues threonine 267, glycine 310, glutamine 314, and glycine 411 each coordinate ATP. 2 residues coordinate ADP: glycine 411 and asparagine 415.

The protein belongs to the FGGY kinase family.

The enzyme catalyses glycerol + ATP = sn-glycerol 3-phosphate + ADP + H(+). It participates in polyol metabolism; glycerol degradation via glycerol kinase pathway; sn-glycerol 3-phosphate from glycerol: step 1/1. Its activity is regulated as follows. Inhibited by fructose 1,6-bisphosphate (FBP). Key enzyme in the regulation of glycerol uptake and metabolism. Catalyzes the phosphorylation of glycerol to yield sn-glycerol 3-phosphate. The protein is Glycerol kinase of Stenotrophomonas maltophilia (strain R551-3).